The sequence spans 189 residues: Peptidyl-tRNA hydrolase (189 aa).

Position 15 (Y15) interacts with tRNA. Residue H20 is the Proton acceptor of the active site. TRNA is bound by residues F66, N68, and N114.

Belongs to the PTH family. In terms of assembly, monomer.

The protein localises to the cytoplasm. The catalysed reaction is an N-acyl-L-alpha-aminoacyl-tRNA + H2O = an N-acyl-L-amino acid + a tRNA + H(+). In terms of biological role, hydrolyzes ribosome-free peptidyl-tRNAs (with 1 or more amino acids incorporated), which drop off the ribosome during protein synthesis, or as a result of ribosome stalling. Functionally, catalyzes the release of premature peptidyl moieties from peptidyl-tRNA molecules trapped in stalled 50S ribosomal subunits, and thus maintains levels of free tRNAs and 50S ribosomes. The protein is Peptidyl-tRNA hydrolase of Streptococcus pneumoniae serotype 2 (strain D39 / NCTC 7466).